Reading from the N-terminus, the 68-residue chain is Acylphosphatase (68 aa).

The Acylphosphatase-like domain maps to 3 to 68 (RIACTVHGRV…RCTAGLPSAP (66 aa)). Residues R18 and N36 contribute to the active site.

This sequence belongs to the acylphosphatase family.

The enzyme catalyses an acyl phosphate + H2O = a carboxylate + phosphate + H(+). In Oleidesulfovibrio alaskensis (strain ATCC BAA-1058 / DSM 17464 / G20) (Desulfovibrio alaskensis), this protein is Acylphosphatase (acyP).